The following is a 131-amino-acid chain: Glycine cleavage system H protein (131 aa).

The region spanning 24–106 is the Lipoyl-binding domain; that stretch reads RVTVGISDHA…YGDGWMYVVE (83 aa). Lys-65 carries the post-translational modification N6-lipoyllysine.

It belongs to the GcvH family. In terms of assembly, the glycine cleavage system is composed of four proteins: P, T, L and H. It depends on (R)-lipoate as a cofactor.

Functionally, the glycine cleavage system catalyzes the degradation of glycine. The H protein shuttles the methylamine group of glycine from the P protein to the T protein. This is Glycine cleavage system H protein from Stenotrophomonas maltophilia (strain R551-3).